Reading from the N-terminus, the 57-residue chain is UPF0509 protein YciZ (57 aa).

The protein belongs to the UPF0509 family.

In Escherichia coli O127:H6 (strain E2348/69 / EPEC), this protein is UPF0509 protein YciZ.